The following is a 385-amino-acid chain: Mitochondrial fission regulator 2 (385 aa).

Position 2 is an N-acetylserine (serine 2). Serine 119 is subject to Phosphoserine. Residues 195–268 are disordered; that stretch reads SVDPDQLPGS…SHHSKSQRNK (74 aa). Pro residues predominate over residues 207-216; sequence SPPPPPPLPP. A compositionally biased stretch (polar residues) spans 231–257; that stretch reads PGSNNICDSDNPATEMSKQNPAANKTN. Residues serine 291 and serine 328 each carry the phosphoserine modification. A disordered region spans residues 331–363; the sequence is KENRSWESSPFSSPETSRFGHHISQSEGQRTKE. A compositionally biased stretch (polar residues) spans 336–346; it reads WESSPFSSPET.

Belongs to the MTFR1 family.

Its subcellular location is the mitochondrion. Functionally, may play a role in mitochondrial aerobic respiration essentially in the testis. Can also promote mitochondrial fission. This is Mitochondrial fission regulator 2 (MTFR2) from Homo sapiens (Human).